The primary structure comprises 313 residues: MKTLLLLIPLVLTACGTLTGIPAHGGGKRFAVEQELVAASSRAAVKEMDLSALKGRKAALYVSVMGDQGSGNISGGRYSIDALIRGGYHNNPDSATRYSYPAYDTTATTKSDALSGVTTSTSLLNAPAAALTKNNGRKGERSAGLSVNGTGDYRNETLLANPRDVSFLTNLIQTVFYLRGIEVVPPEYADTDVFVTVDVFGTVRSRTELHLYNAETLKAQTKLEYFAVDRDSRKLLIAPKTAAYESQYQEQYALWMGPYSVGKTVKASDRLMVDFSDITPYGDTTAQNRPDFKQNNGKNPDVGNEVIRRRKGG.

An N-terminal signal peptide occupies residues Met-1–Ala-14. Residue Cys-15 is the site of N-palmitoyl cysteine attachment. The S-diacylglycerol cysteine moiety is linked to residue Cys-15. Residues Gly-282–Lys-298 are compositionally biased toward polar residues. The disordered stretch occupies residues Gly-282–Gly-313.

The protein belongs to the MafA family.

Its subcellular location is the cell outer membrane. The polypeptide is Adhesin MafA 2/3 (mafA2) (Neisseria gonorrhoeae (strain ATCC 700825 / FA 1090)).